A 138-amino-acid chain; its full sequence is uncharacterized protein (138 aa).

The disordered stretch occupies residues Asp-89–Glu-138.

This is an uncharacterized protein from Treponema pallidum (strain Nichols).